The primary structure comprises 405 residues: Cytoplasmic 60S subunit biogenesis factor ZNF622 (405 aa).

U1-type zinc fingers lie at residues 4–28 and 67–91; these read YTCITCRVAFKDADIQRAHYKTDWH and TYCTVCSKRFSTFNAYENHLKSKKH. Positions 135 to 230 are disordered; the sequence is AIRAQPSSSP…GVEEEEEKQA (96 aa). A compositionally biased stretch (acidic residues) spans 194–228; the sequence is AEEEEDSEEGWEEMDSDEDLGSEEEMEGVEEEEEK.

It belongs to the REI1 family. As to quaternary structure, homo- and heterodimer. Associates with pre-60S ribosomal particles. As to expression, mainly expressed in the ovary. Mainly expressed in the testis.

It is found in the cytoplasm. The protein localises to the nucleus. Its function is as follows. Pre-60S-associated cytoplasmic factor involved in the cytoplasmic maturation of the 60S subunit. The polypeptide is Cytoplasmic 60S subunit biogenesis factor ZNF622 (ZNF622) (Gallus gallus (Chicken)).